We begin with the raw amino-acid sequence, 1294 residues long: Ethylene-insensitive protein 2 (1294 aa).

The Cytoplasmic segment spans residues 1–12; sequence MEAEIVNVRPQL. Residues 13–33 traverse the membrane as a helical segment; that stretch reads GFIQRMVPALLPVLLVSVGYI. Residues 34-50 lie on the Extracellular side of the membrane; sequence DPGKWVANIEGGARFGY. A helical transmembrane segment spans residues 51 to 71; the sequence is DLVAITLLFNFAAILCQYVAA. The Cytoplasmic portion of the chain corresponds to 72-105; the sequence is RISVVTGKHLAQICNEEYDKWTCMFLGIQAEFSA. A helical transmembrane segment spans residues 106–126; sequence ILLDLTMVVGVAHALNLLFGV. Position 127 (glutamate 127) is a topological domain, extracellular. The helical transmembrane segment at 128-148 threads the bilayer; that stretch reads LSTGVFLAAMDAFLFPVFASF. Residues 149–155 lie on the Cytoplasmic side of the membrane; sequence LENGMAN. A helical membrane pass occupies residues 156–176; that stretch reads TVSIYSAGLVLLLYVSGVLLS. Topologically, residues 177 to 194 are extracellular; it reads QSEIPLSMNGVLTRLNGE. Residues 195-215 form a helical membrane-spanning segment; sequence SAFALMGLLGASIVPHNFYIH. Residues 216–237 lie on the Cytoplasmic side of the membrane; that stretch reads SYFAGESTSSSDVDKSSLCQDH. The chain crosses the membrane as a helical span at residues 238–258; it reads LFAIFGVFSGLSLVNYVLMNA. Residues 259–287 are Extracellular-facing; that stretch reads AANVFHSTGLVVLTFHDALSLMEQVFMSP. The helical transmembrane segment at 288–308 threads the bilayer; it reads LIPVVFLMLLFFSSQITALAW. Over 309–334 the chain is Cytoplasmic; sequence AFGGEVVLHDFLKIEIPAWLHRATIR. Helical transmembrane passes span 335 to 355 and 356 to 376; these read ILAV…GIYQ and LLIF…IPLF. The Cytoplasmic portion of the chain corresponds to 377–397; sequence RIASSRQIMGVHKIPQVGEFL. Residues 398 to 418 traverse the membrane as a helical segment; it reads ALTTFLGFLGLNVVFVVEMVF. The Extracellular segment spans residues 419-440; sequence GSSDWAGGLRWNTVMGTSIQYT. The chain crosses the membrane as a helical span at residues 441–461; it reads TLLVSSCASLCLILWLAATPL. Topologically, residues 462–1294 are cytoplasmic; that stretch reads KSASNRAEAQ…KNVTAYGSLG (833 aa). Disordered regions lie at residues 534–561 and 623–662; these read TDQE…SSLK and ETEE…SLSR. Residues 536–550 show a composition bias toward basic and acidic residues; the sequence is QEIRSSPPEERELDV. Phosphoserine is present on residues serine 645, serine 659, and serine 757. Threonine 819 is modified (phosphothreonine). Serine 924 is modified (phosphoserine). The short motif at 1262 to 1269 is the Nuclear localization signal element; the sequence is LKRYKRRL. Residues 1269–1294 are disordered; sequence LSNKPVGMNQDGPGSRKNVTAYGSLG. Serine 1283 carries the post-translational modification Phosphoserine.

This sequence belongs to the NRAMP (TC 2.A.55) family. Interacts (via NLS) with ETR1. Interacts (via C-terminus) with EER5 and the COP9 signalosome subunits CSN3, CSN6A and CSN6B. Interacts with ETP1 and ETP2. Interacts with CTR1. Interacts with all members of the ethylene receptor family, including ETR1, ETR2, ERS1, ERS2 and EIN4. Binds to MRF3/ECIP1. In terms of assembly, interacts with several P-body components, such as XRN4/EIN5, PAB2, PAB4 and PAB8. Binds to ENAP1 in the presence of ethylene; this reaction facilitates its association with histone. Post-translationally, phosphorylated by CTR1 on at least 4 sites. Phosphorylation of Ser-645 and Ser-924 is involved in repressing EIN2 signaling. Loss of phosphorylation results in nuclear localization of the C-terminus of EIN2. Localized to the guard cells after methyl jasmonate treatment.

The protein resides in the endoplasmic reticulum membrane. The protein localises to the nucleus. It localises to the cytoplasm. Central factor in signaling pathways regulated by ethylene (ET) and involved in various processes including development, plant defense, senescence, nucleotide sugar flux, and tropisms. Necessary for ethylene-mediated gene regulation, and for the induction of some genes by ozone. Acts downstream of ET receptors, and upstream of ethylene regulated transcription factors. Required for cytokinin-mediated processes. Seems to be implicated in cross-talk between ET, jasmonate and other pathways. Probably not involved in iron uptake. Has a short half-life and undergoes rapid proteasome-mediated turnover in the absence of ethylene. Required for ethylene-induced EIN3 stabilization via proteasomal degradation of EBF1/EBF2 proteins. Regulates the leaf senescence induced by methyl jasmonate, ethylene and abscisic acid. Required during salt stress to confer resistance. Its function is as follows. Trafficking signal inducing ethylene response. The nuclear localization is both necessary and sufficient to activate EIN3-mediated transcription and ethylene responses. Involved in ethylene (ET)-mediated signaling pathways by triggering histone acetylation of H3K14 and H3K23 in an ENAP1-dependent manner, thus influencing the expression of ethylene-responsive genes. Necessary and sufficient for 3'-UTR-mediated translational repression of EBF1 and EBF2 mRNAs. Ethylene induces EIN2-CEND to associate with 3' UTRs in cytoplasmic foci and target EBF1/2 mRNAs to cytoplasmic processing-body (P-body). MPK6 regulates the cleavage and nuclear translocation of EIN2-CEND under methyl jasmonate treatment. Required for EIN3 accumulation. This Arabidopsis thaliana (Mouse-ear cress) protein is Ethylene-insensitive protein 2.